We begin with the raw amino-acid sequence, 508 residues long: MEEFKRYLELDRSQQHNFVYPLIFQEYIYALAHDHGLNKSILLENAGYDNKSSLLIVKRLITHLITQMYQQNHFIFSANDSNQNKIFGHNTNLYSQMILEGFAVVVEIPFSSRLISFLEGKEIVKSKNLRSIHSIFPFLEDKFPHLNYVLDILILHSIHLEILVQTLRYWVKDASSLHLLRFFLYEYRNWNSLITPKKSSFSFSKRNQRLFLFLYNYHVCEYESIFIFLRNQSSHLRSISSGTFFEQIDFYEKIEHFVEVFTKDFQAILWLCKDPFMHYIRYQGKSLLASKGKSLLMNKWKYYFVNFWQCYFYMWSQPGRIHINQLSNHSFDFLGYLSSVRLTPSMVRSQMLENSFLIGNAIKKFDTLVPIIPLIGSLSKAKFCNVLGHPISKPVWADLSDSDIIDRFGRIYRNLSHYYSGSSKKMNLYRIKYILRLSCARTLARKHKSTVRAFLKRLGSELLEEFFTEEERVFSLTFKKASSTSRGLYRRRIWYLDIICINDLANHK.

Belongs to the intron maturase 2 family. MatK subfamily.

It is found in the plastid. The protein localises to the chloroplast. In terms of biological role, usually encoded in the trnK tRNA gene intron. Probably assists in splicing its own and other chloroplast group II introns. The chain is Maturase K from Manilkara zapota (Sapodilla plum).